The following is a 914-amino-acid chain: Linoleate 13S-lipoxygenase 3-1, chloroplastic (914 aa).

The transit peptide at 1–83 (MALAKEIMGI…PEKAVRFKVR (83 aa)) directs the protein to the chloroplast. Residues 96-218 (LKETIVKHLD…DHPGKRIFFS (123 aa)) form the PLAT domain. The Lipoxygenase domain occupies 221–914 (PYLPDETPAG…CRGVPNSVSI (694 aa)). Residues His-574, His-579, His-765, Asn-769, and Ile-914 each coordinate Fe cation.

It belongs to the lipoxygenase family. In terms of assembly, monomer. It depends on Fe cation as a cofactor. Expressed in roots and leaves. Detected in tubers and flower buds.

It localises to the plastid. The protein localises to the chloroplast stroma. The protein resides in the chloroplast thylakoid. The catalysed reaction is (9Z,12Z)-octadecadienoate + O2 = (13S)-hydroperoxy-(9Z,11E)-octadecadienoate. It carries out the reaction (9Z,12Z,15Z)-octadecatrienoate + O2 = (13S)-hydroperoxy-(9Z,11E,15Z)-octadecatrienoate. It functions in the pathway lipid metabolism; oxylipin biosynthesis. Functionally, plant lipoxygenases may be involved in a number of diverse aspects of plant physiology including growth and development, pest resistance, and senescence or responses to wounding. Required for the regulation of wound-induced gene expression, but is not involved in the bulk production of jasmonate upon wounding. Catalyzes the hydroperoxidation of lipids containing a cis,cis-1,4-pentadiene structure. Linolenic acid is the preferred substrate, before linoleic and arachidonic acids. In Solanum tuberosum (Potato), this protein is Linoleate 13S-lipoxygenase 3-1, chloroplastic (LOX3.1).